Consider the following 406-residue polypeptide: Cysteine desulfurase (406 aa).

Lys-226 carries the post-translational modification N6-(pyridoxal phosphate)lysine. The active-site Cysteine persulfide intermediate is the Cys-364.

Belongs to the class-V pyridoxal-phosphate-dependent aminotransferase family. Csd subfamily. As to quaternary structure, homodimer. Interacts with SufE and the SufBCD complex composed of SufB, SufC and SufD. The interaction with SufE is required to mediate the direct transfer of the sulfur atom from the S-sulfanylcysteine. The cofactor is pyridoxal 5'-phosphate.

It is found in the cytoplasm. It carries out the reaction (sulfur carrier)-H + L-cysteine = (sulfur carrier)-SH + L-alanine. The enzyme catalyses L-selenocysteine + AH2 = hydrogenselenide + L-alanine + A + H(+). Its pathway is cofactor biosynthesis; iron-sulfur cluster biosynthesis. Its function is as follows. Cysteine desulfurases mobilize the sulfur from L-cysteine to yield L-alanine, an essential step in sulfur metabolism for biosynthesis of a variety of sulfur-containing biomolecules. Component of the suf operon, which is activated and required under specific conditions such as oxidative stress and iron limitation. Acts as a potent selenocysteine lyase in vitro, that mobilizes selenium from L-selenocysteine. Selenocysteine lyase activity is however unsure in vivo. The sequence is that of Cysteine desulfurase (sufS) from Shigella flexneri.